We begin with the raw amino-acid sequence, 98 residues long: Small ribosomal subunit protein bTHXm (98 aa).

A mitochondrion-targeting transit peptide spans 1-35; it reads MAAMQWCGAMTRRIMMTQRTSAALNCSARYSSLSP. A disordered region spans residues 52–71; that stretch reads DKKTKKGKRFKGSYGNSRGK. A compositionally biased stretch (basic residues) spans 53-62; sequence KKTKKGKRFK.

The protein belongs to the bacterial ribosomal protein bTHX family. Component of the mitochondrial ribosome small subunit.

The protein localises to the mitochondrion. The protein is Small ribosomal subunit protein bTHXm of Arabidopsis thaliana (Mouse-ear cress).